Consider the following 375-residue polypeptide: Cinnamyl alcohol dehydrogenase 3 (375 aa).

C44 lines the Zn(2+) pocket. Position 46 (S46) interacts with NADP(+). Zn(2+) is bound by residues H66, E67, C97, C100, C103, C111, and C160. Residues T164, 186 to 191 (GLGGLG), 209 to 214 (SRSSEK), T249, G273, and 296 to 298 (SQI) contribute to the NADP(+) site.

It belongs to the zinc-containing alcohol dehydrogenase family. In terms of assembly, homodimer. Zn(2+) is required as a cofactor. In terms of tissue distribution, expressed in the root tips. Expressed in the apical meristematic regions, leaf veins and at the base of the trichomes. Expressed at the base of the stems. Expressed in the abscission zones of newly formed siliques.

It catalyses the reaction (E)-cinnamyl alcohol + NADP(+) = (E)-cinnamaldehyde + NADPH + H(+). The enzyme catalyses (E)-coniferol + NADP(+) = (E)-coniferaldehyde + NADPH + H(+). The catalysed reaction is (E)-sinapyl alcohol + NADP(+) = (E)-sinapaldehyde + NADPH + H(+). It carries out the reaction (E)-4-coumaroyl alcohol + NADP(+) = (E)-4-coumaraldehyde + NADPH + H(+). It catalyses the reaction (E)-caffeyl alcohol + NADP(+) = (E)-caffeyl aldehyde + NADPH + H(+). It functions in the pathway aromatic compound metabolism; phenylpropanoid biosynthesis. Its function is as follows. Involved in lignin biosynthesis. Catalyzes the final step specific for the production of lignin monomers. Catalyzes the NADPH-dependent reduction of coniferaldehyde, 5-hydroxyconiferaldehyde, sinapaldehyde, 4-coumaraldehyde and caffeyl aldehyde to their respective alcohols. This chain is Cinnamyl alcohol dehydrogenase 3, found in Arabidopsis thaliana (Mouse-ear cress).